Reading from the N-terminus, the 513-residue chain is Serine/threonine-protein kinase pakH (513 aa).

Residues 42–294 (FEIQEKLGEG…PSQLLDHPFI (253 aa)) enclose the Protein kinase domain. ATP-binding positions include 48-56 (LGEGSFGSV) and Lys-71. Catalysis depends on Asp-163, which acts as the Proton acceptor. Residues 313 to 358 (KSKKRKSIGPSVSPKQQPNDNNNNNNNNKPQFLSKLLNNNSNSSND) form a disordered region. Residues 331–357 (NDNNNNNNNNKPQFLSKLLNNNSNSSN) show a composition bias toward low complexity. The chain crosses the membrane as a helical span at residues 493–512 (IVLYSTLGLILVLSVFFKFF).

This sequence belongs to the protein kinase superfamily. STE Ser/Thr protein kinase family. STE20 subfamily. Mg(2+) is required as a cofactor.

It is found in the membrane. The catalysed reaction is L-seryl-[protein] + ATP = O-phospho-L-seryl-[protein] + ADP + H(+). It carries out the reaction L-threonyl-[protein] + ATP = O-phospho-L-threonyl-[protein] + ADP + H(+). This Dictyostelium discoideum (Social amoeba) protein is Serine/threonine-protein kinase pakH (pakH-1).